Reading from the N-terminus, the 161-residue chain is Nucleotide-binding protein PputW619_0959 (161 aa).

This sequence belongs to the YajQ family.

Nucleotide-binding protein. This Pseudomonas putida (strain W619) protein is Nucleotide-binding protein PputW619_0959.